The primary structure comprises 568 residues: Glucose-6-phosphate isomerase, cytosolic (568 aa).

The Proton donor role is filled by Glu360. Residues His391 and Lys516 contribute to the active site.

This sequence belongs to the GPI family. Homodimer.

Its subcellular location is the cytoplasm. The enzyme catalyses alpha-D-glucose 6-phosphate = beta-D-fructose 6-phosphate. It functions in the pathway carbohydrate degradation; glycolysis; D-glyceraldehyde 3-phosphate and glycerone phosphate from D-glucose: step 2/4. This chain is Glucose-6-phosphate isomerase, cytosolic (PGIC), found in Oenothera sinuata var. hirsuta (Mexican evening primrose).